A 714-amino-acid chain; its full sequence is Fatty acid oxidation complex subunit alpha (714 aa).

Residues 1–190 (MEMASAFTLN…KLGLVDDVVP (190 aa)) form an enoyl-CoA hydratase region. Residues 306-714 (APLNSVGILG…FWKTTATDLQ (409 aa)) form a 3-hydroxyacyl-CoA dehydrogenase region.

The protein in the N-terminal section; belongs to the enoyl-CoA hydratase/isomerase family. In the central section; belongs to the 3-hydroxyacyl-CoA dehydrogenase family. As to quaternary structure, heterotetramer of two alpha chains (FadJ) and two beta chains (FadI).

It is found in the cytoplasm. It catalyses the reaction a (3S)-3-hydroxyacyl-CoA = a (2E)-enoyl-CoA + H2O. The enzyme catalyses a 4-saturated-(3S)-3-hydroxyacyl-CoA = a (3E)-enoyl-CoA + H2O. The catalysed reaction is a (3S)-3-hydroxyacyl-CoA + NAD(+) = a 3-oxoacyl-CoA + NADH + H(+). It carries out the reaction (3S)-3-hydroxybutanoyl-CoA = (3R)-3-hydroxybutanoyl-CoA. It participates in lipid metabolism; fatty acid beta-oxidation. Catalyzes the formation of a hydroxyacyl-CoA by addition of water on enoyl-CoA. Also exhibits 3-hydroxyacyl-CoA epimerase and 3-hydroxyacyl-CoA dehydrogenase activities. The chain is Fatty acid oxidation complex subunit alpha from Escherichia coli O45:K1 (strain S88 / ExPEC).